A 785-amino-acid chain; its full sequence is Endonuclease MutS2 (785 aa).

335–342 (GPNTGGKT) contributes to the ATP binding site. A Smr domain is found at 710 to 785 (LDLRGERYEE…GLGNTVVELR (76 aa)). A disordered region spans residues 764–785 (VKSARDGGANEGGLGNTVVELR).

This sequence belongs to the DNA mismatch repair MutS family. MutS2 subfamily. In terms of assembly, homodimer. Binds to stalled ribosomes, contacting rRNA.

Functionally, endonuclease that is involved in the suppression of homologous recombination and thus may have a key role in the control of bacterial genetic diversity. In terms of biological role, acts as a ribosome collision sensor, splitting the ribosome into its 2 subunits. Detects stalled/collided 70S ribosomes which it binds and splits by an ATP-hydrolysis driven conformational change. Acts upstream of the ribosome quality control system (RQC), a ribosome-associated complex that mediates the extraction of incompletely synthesized nascent chains from stalled ribosomes and their subsequent degradation. Probably generates substrates for RQC. The sequence is that of Endonuclease MutS2 from Halalkalibacterium halodurans (strain ATCC BAA-125 / DSM 18197 / FERM 7344 / JCM 9153 / C-125) (Bacillus halodurans).